We begin with the raw amino-acid sequence, 361 residues long: Peptide chain release factor 1 (361 aa).

Position 237 is an N5-methylglutamine (Gln-237). The segment covering 286-296 has biased composition (basic and acidic residues); that stretch reads EKRRSAEESTR. The interval 286 to 305 is disordered; sequence EKRRSAEESTRRNLVSSGDR.

This sequence belongs to the prokaryotic/mitochondrial release factor family. Methylated by PrmC. Methylation increases the termination efficiency of RF1.

The protein resides in the cytoplasm. Peptide chain release factor 1 directs the termination of translation in response to the peptide chain termination codons UAG and UAA. This chain is Peptide chain release factor 1, found in Shewanella pealeana (strain ATCC 700345 / ANG-SQ1).